Consider the following 197-residue polypeptide: ATP-dependent Clp protease proteolytic subunit 1 (197 aa).

The active-site Nucleophile is Ser-100. Residue His-125 is part of the active site.

It belongs to the peptidase S14 family. As to quaternary structure, fourteen ClpP subunits assemble into 2 heptameric rings which stack back to back to give a disk-like structure with a central cavity, resembling the structure of eukaryotic proteasomes.

Its subcellular location is the cytoplasm. It catalyses the reaction Hydrolysis of proteins to small peptides in the presence of ATP and magnesium. alpha-casein is the usual test substrate. In the absence of ATP, only oligopeptides shorter than five residues are hydrolyzed (such as succinyl-Leu-Tyr-|-NHMec, and Leu-Tyr-Leu-|-Tyr-Trp, in which cleavage of the -Tyr-|-Leu- and -Tyr-|-Trp bonds also occurs).. Its function is as follows. Cleaves peptides in various proteins in a process that requires ATP hydrolysis. Has a chymotrypsin-like activity. Plays a major role in the degradation of misfolded proteins. The chain is ATP-dependent Clp protease proteolytic subunit 1 from Gloeobacter violaceus (strain ATCC 29082 / PCC 7421).